Here is a 110-residue protein sequence, read N- to C-terminus: Class I hydrophobin Po.HYD (110 aa).

The N-terminal stretch at 1-27 (MFSKATLFFTTVSRYRDTQAPIPTGQT) is a signal peptide. Cystine bridges form between Cys35–Cys91, Cys42–Cys85, Cys43–Cys75, and Cys92–Cys105.

Belongs to the fungal hydrophobin family. In terms of assembly, self-assembles to form functional amyloid fibrils called rodlets. Self-assembly into fibrillar rodlets occurs spontaneously at hydrophobic:hydrophilic interfaces and the rodlets further associate laterally to form amphipathic monolayers.

The protein localises to the secreted. The protein resides in the cell wall. Aerial growth, conidiation, and dispersal of filamentous fungi in the environment rely upon a capability of their secreting small amphipathic proteins called hydrophobins (HPBs) with low sequence identity. Class I can self-assemble into an outermost layer of rodlet bundles on aerial cell surfaces, conferring cellular hydrophobicity that supports fungal growth, development and dispersal; whereas Class II form highly ordered films at water-air interfaces through intermolecular interactions but contribute nothing to the rodlet structure. This chain is Class I hydrophobin Po.HYD, found in Pleurotus ostreatus (Oyster mushroom).